The chain runs to 561 residues: DNA ligase B (561 aa).

Residue K125 is the N6-AMP-lysine intermediate of the active site.

It belongs to the NAD-dependent DNA ligase family. LigB subfamily.

It carries out the reaction NAD(+) + (deoxyribonucleotide)n-3'-hydroxyl + 5'-phospho-(deoxyribonucleotide)m = (deoxyribonucleotide)n+m + AMP + beta-nicotinamide D-nucleotide.. In terms of biological role, catalyzes the formation of phosphodiester linkages between 5'-phosphoryl and 3'-hydroxyl groups in double-stranded DNA using NAD as a coenzyme and as the energy source for the reaction. The sequence is that of DNA ligase B from Salmonella gallinarum (strain 287/91 / NCTC 13346).